A 625-amino-acid polypeptide reads, in one-letter code: Endo-1,4-beta-xylanase A (625 aa).

The signal sequence occupies residues 1–19 (MKLFQIFPLLLSLTSVTLA). In terms of domain architecture, GH11 1 spans 35–231 (VSTGHDVKKI…TGGGCSGSVE (197 aa)). Residues 245 to 283 (DGKSKGGSSSGGSNGQGLGNGQGNGQGQGNGQGQSATGS) form a disordered region. The segment covering 252 to 276 (SSSGGSNGQGLGNGQGNGQGQGNGQ) has biased composition (gly residues). Residues 255 to 279 (GGSNGQGLGNGQGNGQGQGNGQGQS) are linker. A run of 2 repeats spans residues 259-268 (GQGLGNGQGN) and 269-278 (GQGQGNGQGQ). The segment at 259-278 (GQGLGNGQGNGQGQGNGQGQ) is 2 X 10 AA tandem repeats of G-Q-G-[LQ]-G-N-G-Q-G-[NQ]. 2 CBM10 domains span residues 285 to 324 (KCPS…CGCG) and 332 to 371 (NCPS…CGCG). Residues 374 to 403 (NTTPTTTTKKSNNSQPTQGQSNNNSSTNTN) form a linker region. Residues 379-399 (TTTKKSNNSQPTQGQSNNNSS) are disordered. Positions 416-617 (TETSNKVGSI…GSGTSGTADF (202 aa)) constitute a GH11 2 domain. The Nucleophile role is filled by E510. Catalysis depends on E603, which acts as the Proton donor.

This sequence belongs to the glycosyl hydrolase 11 (cellulase G) family.

It catalyses the reaction Endohydrolysis of (1-&gt;4)-beta-D-xylosidic linkages in xylans.. The protein operates within glycan degradation; xylan degradation. In terms of biological role, hydrolyzes 1,4-beta linked polysaccharide backbones of xylans, one of the major hemicellulose components in hardwoods and softwoods. It is more active against xylopentaose than xylotetraose, has trace activity against xylotriose. The major products released from hydrolysis of xylooligosaccharides are xylobiose and xylotriose. The reiterated 40 AA domain is involved in binding the cellulase-hemicellulase complex. The chain is Endo-1,4-beta-xylanase A (XYNA) from Piromyces sp.